Reading from the N-terminus, the 721-residue chain is Ophiobolin F synthase oblA (721 aa).

The interval 5-325 (YDQPYSVLLD…RYNLKAEWNE (321 aa)) is (7Z)-ophiobola-7,19-dien-3-ol synthase. Residues aspartate 97 and aspartate 101 each contribute to the Mg(2+) site. Aspartate 97 contributes to the substrate binding site. The short motif at 97 to 101 (DDVID) is the DDXXD 1 element. Substrate contacts are provided by residues 185 to 188 (RSLD), asparagine 229, 233 to 237 (SFEKE), and 316 to 317 (RY). An NSE/DTE motif is present at residues 229 to 237 (NDLFSFEKE). A geranylfarnesyl diphosphate synthase region spans residues 326 to 721 (LQMLRAKHGV…LRLMMEMLKV (396 aa)). Residues 348 to 387 (SMDHIWKKGSTQGESKGEKRKRQSVNGTNGVNGTNGVKKP) are disordered. Low complexity predominate over residues 372 to 384 (VNGTNGVNGTNGV). Isopentenyl diphosphate-binding residues include lysine 432, arginine 435, and histidine 464. Mg(2+) contacts are provided by aspartate 471 and aspartate 475. Residues 471 to 475 (DDLED) carry the DDXXD 2 motif. Arginine 480 is a dimethylallyl diphosphate binding site. An isopentenyl diphosphate-binding site is contributed by arginine 481. Residues lysine 558, threonine 559, glutamine 597, asparagine 604, lysine 614, and lysine 624 each contribute to the dimethylallyl diphosphate site.

In the N-terminal section; belongs to the terpene synthase family. This sequence in the C-terminal section; belongs to the FPP/GGPP synthase family. Mg(2+) is required as a cofactor.

It catalyses the reaction isopentenyl diphosphate + (2E,6E)-farnesyl diphosphate = (2E,6E,10E)-geranylgeranyl diphosphate + diphosphate. The enzyme catalyses isopentenyl diphosphate + (2E,6E,10E)-geranylgeranyl diphosphate = (2E,6E,10E,14E)-geranylfarnesyl diphosphate + diphosphate. It carries out the reaction (2E,6E,10E,14E)-geranylfarnesyl diphosphate + H2O = ophiobolin F + diphosphate. The protein operates within secondary metabolite biosynthesis; terpenoid biosynthesis. Bifunctional sesterterpene synthase; part of the gene cluster that mediates the biosynthesis of the sesterterpenes ophiobolins, fungal phytotoxins with potential anti-cancer activities. The first step of the pathway is performed by the sesterterpene synthase oblA that possesses both prenyl transferase and terpene cyclase activity, converting isopentenyl diphosphate and dimethylallyl diphosphate into geranylfarnesyl diphosphate (GFPP) and further converting GFPP into ophiobolin F, respectively. Other sesterterpenoids (C(25) terpenoids) are found as minor products of oblA. The cytochrome P450 monooxygenase oblB then catalyzes a four-step oxidative transformation of ophiobolin F to yield ophiobolin C. The FAD-dependent oxidoreductase oblC might be involved in a later oxidation step that produces ophiobolin A. The protein is Ophiobolin F synthase oblA of Cochliobolus heterostrophus (strain C5 / ATCC 48332 / race O) (Southern corn leaf blight fungus).